Consider the following 528-residue polypeptide: Benzoylformate decarboxylase (528 aa).

The Mg(2+) site is built by Gln-117 and Leu-118. The thiamine pyrophosphate binding stretch occupies residues 377 to 460; the sequence is TSTVTAFWQR…IILKNGTYGA (84 aa). Positions 428, 455, and 457 each coordinate Ca(2+).

It belongs to the TPP enzyme family. Homotetramer. Requires Ca(2+) as cofactor. Thiamine diphosphate serves as cofactor. Mg(2+) is required as a cofactor.

It catalyses the reaction phenylglyoxylate + H(+) = benzaldehyde + CO2. It functions in the pathway aromatic compound metabolism; (R)-mandelate degradation; benzoate from (R)-mandelate: step 3/4. The chain is Benzoylformate decarboxylase (mdlC) from Pseudomonas aeruginosa (strain ATCC 15692 / DSM 22644 / CIP 104116 / JCM 14847 / LMG 12228 / 1C / PRS 101 / PAO1).